Consider the following 284-residue polypeptide: Probable tRNA-splicing endonuclease subunit sen34 (284 aa).

Catalysis depends on residues Y206, H214, and K245.

The protein belongs to the tRNA-intron endonuclease family. In terms of assembly, heterotetramer composed of sen2, sen15, sen34 and sen54. Interacts directly with sen15.

The catalysed reaction is pretRNA = a 3'-half-tRNA molecule with a 5'-OH end + a 5'-half-tRNA molecule with a 2',3'-cyclic phosphate end + an intron with a 2',3'-cyclic phosphate and a 5'-hydroxyl terminus.. Constitutes one of the two catalytic subunit of the tRNA-splicing endonuclease complex, a complex responsible for identification and cleavage of the splice sites in pre-tRNA. It cleaves pre-tRNA at the 5'- and 3'-splice sites to release the intron. The products are an intron and two tRNA half-molecules bearing 2',3'-cyclic phosphate and 5'-OH termini. There are no conserved sequences at the splice sites, but the intron is invariably located at the same site in the gene, placing the splice sites an invariant distance from the constant structural features of the tRNA body. It probably carries the active site for 3'-splice site cleavage. The sequence is that of Probable tRNA-splicing endonuclease subunit sen34 (sen34) from Schizosaccharomyces pombe (strain 972 / ATCC 24843) (Fission yeast).